A 600-amino-acid polypeptide reads, in one-letter code: DDB1- and CUL4-associated factor 15 (600 aa).

The tract at residues 1–30 (MAPSSKSERNSGAGSGGGGPGGAGGKRAAG) is disordered. The segment covering 13 to 27 (AGSGGGGPGGAGGKR) has biased composition (gly residues). The residue at position 50 (serine 50) is a Phosphoserine. The Zn(2+) site is built by cysteine 193, cysteine 196, cysteine 211, and histidine 214. E7820 is bound by residues phenylalanine 231 and 234 to 235 (AF). Positions 280 to 295 (PASPPEPQSPELPPAL) are enriched in pro residues. The interval 280–316 (PASPPEPQSPELPPALPSFCPEAAPARSSGSPEPSPA) is disordered. 2 positions are modified to phosphoserine: serine 310 and serine 314.

Component of the DCX(DCAF15) complex, also named CLR4(DCAF15) complex, composed of DCAF15, DDB1, cullin-4 (CUL4A or CUL4B), DDA1 and RBX1.

Its pathway is protein modification; protein ubiquitination. With respect to regulation, aryl sulfonamide anticancer drugs change the substrate specificity of DCAF15 by acting as a molecular glue that promotes binding between DCAF15 and weak affinity interactors, such as RBM39. Its function is as follows. Substrate-recognition component of the DCX(DCAF15) complex, a cullin-4-RING E3 ubiquitin-protein ligase complex that mediates ubiquitination and degradation of target proteins. The DCX(DCAF15) complex acts as a regulator of the natural killer (NK) cells effector functions, possibly by mediating ubiquitination and degradation of cohesin subunits SMC1A and SMC3. May play a role in the activation of antigen-presenting cells (APC) and their interaction with NK cells. In terms of biological role, binding of aryl sulfonamide anticancer drugs, such as indisulam (E7070) or E7820, change the substrate specificity of the DCX(DCAF15) complex, leading to promote ubiquitination and degradation of splicing factor RBM39. RBM39 degradation results in splicing defects and death in cancer cell lines. Aryl sulfonamide anticancer drugs change the substrate specificity of DCAF15 by acting as a molecular glue that promotes binding between DCAF15 and weak affinity interactor RBM39. Aryl sulfonamide anticancer drugs also promote ubiquitination and degradation of RBM23 and PRPF39. The sequence is that of DDB1- and CUL4-associated factor 15 from Homo sapiens (Human).